We begin with the raw amino-acid sequence, 267 residues long: Tryptophan synthase alpha chain (267 aa).

Residues glutamate 49 and aspartate 60 each act as proton acceptor in the active site.

Belongs to the TrpA family. Tetramer of two alpha and two beta chains.

The catalysed reaction is (1S,2R)-1-C-(indol-3-yl)glycerol 3-phosphate + L-serine = D-glyceraldehyde 3-phosphate + L-tryptophan + H2O. The protein operates within amino-acid biosynthesis; L-tryptophan biosynthesis; L-tryptophan from chorismate: step 5/5. In terms of biological role, the alpha subunit is responsible for the aldol cleavage of indoleglycerol phosphate to indole and glyceraldehyde 3-phosphate. This Methylococcus capsulatus (strain ATCC 33009 / NCIMB 11132 / Bath) protein is Tryptophan synthase alpha chain.